We begin with the raw amino-acid sequence, 355 residues long: UDP-N-acetylglucosamine--N-acetylmuramyl-(pentapeptide) pyrophosphoryl-undecaprenol N-acetylglucosamine transferase (355 aa).

UDP-N-acetyl-alpha-D-glucosamine contacts are provided by residues 13–15 (TGG), Asn125, Arg162, Ser190, Ile244, and Gln289.

This sequence belongs to the glycosyltransferase 28 family. MurG subfamily.

The protein resides in the cell inner membrane. The enzyme catalyses di-trans,octa-cis-undecaprenyl diphospho-N-acetyl-alpha-D-muramoyl-L-alanyl-D-glutamyl-meso-2,6-diaminopimeloyl-D-alanyl-D-alanine + UDP-N-acetyl-alpha-D-glucosamine = di-trans,octa-cis-undecaprenyl diphospho-[N-acetyl-alpha-D-glucosaminyl-(1-&gt;4)]-N-acetyl-alpha-D-muramoyl-L-alanyl-D-glutamyl-meso-2,6-diaminopimeloyl-D-alanyl-D-alanine + UDP + H(+). Its pathway is cell wall biogenesis; peptidoglycan biosynthesis. Its function is as follows. Cell wall formation. Catalyzes the transfer of a GlcNAc subunit on undecaprenyl-pyrophosphoryl-MurNAc-pentapeptide (lipid intermediate I) to form undecaprenyl-pyrophosphoryl-MurNAc-(pentapeptide)GlcNAc (lipid intermediate II). The chain is UDP-N-acetylglucosamine--N-acetylmuramyl-(pentapeptide) pyrophosphoryl-undecaprenol N-acetylglucosamine transferase from Neisseria meningitidis serogroup C (strain 053442).